Consider the following 269-residue polypeptide: Surfeit locus protein 4 (269 aa).

A run of 6 helical transmembrane segments spans residues 64-84 (FLAS…CILV), 92-112 (YACF…SILW), 157-177 (MQLG…HFDM), 179-199 (FFYI…AIGF), 203-223 (LAAL…NAFW), and 242-262 (TMSV…GVSM). The Di-lysine motif motif lies at 266–269 (KKEW).

The protein belongs to the SURF4 family.

It is found in the endoplasmic reticulum membrane. It localises to the endoplasmic reticulum-Golgi intermediate compartment membrane. The protein localises to the golgi apparatus membrane. Functionally, endoplasmic reticulum cargo receptor that mediates the export of lipoproteins by recruiting cargos into COPII vesicles to facilitate their secretion. Acts as a cargo receptor for lipoproteins bearing both APOB and APOA1, thereby regulating lipoprotein delivery and the maintenance of lipid homeostasis. The protein is Surfeit locus protein 4 of Gallus gallus (Chicken).